Here is a 152-residue protein sequence, read N- to C-terminus: UPF0266 membrane protein YobD (152 aa).

The next 3 helical transmembrane spans lie at 6–26, 45–65, and 67–87; these read LVLILFIAALLAYALYDQFIM, VDSVIFVGLVAILIYNNVTSH, and AQMTTWLLSALALMGFYIFWI.

Belongs to the UPF0266 family.

Its subcellular location is the cell inner membrane. The chain is UPF0266 membrane protein YobD from Salmonella paratyphi B (strain ATCC BAA-1250 / SPB7).